The primary structure comprises 505 residues: Lysine--tRNA ligase (505 aa).

Mg(2+) is bound by residues glutamate 415 and glutamate 422.

Belongs to the class-II aminoacyl-tRNA synthetase family. In terms of assembly, homodimer. Requires Mg(2+) as cofactor.

The protein resides in the cytoplasm. It carries out the reaction tRNA(Lys) + L-lysine + ATP = L-lysyl-tRNA(Lys) + AMP + diphosphate. This Salmonella arizonae (strain ATCC BAA-731 / CDC346-86 / RSK2980) protein is Lysine--tRNA ligase.